We begin with the raw amino-acid sequence, 641 residues long: MLRATALHEWLMTPTVAQDVSTRTREPQHWAALGALGIVYGDLGTSPLYTLQTVVQATGGHFTTASALGILSLLVWTLIITISIKYCLFVMRADNHGEGGILALMSLVGANRFKGTAKILAVMGLLGAALLYGDGVITPAISVLSALEGVNVVTGSLKPFVMPAAVAILIVFFAAQRFGTARIGAAFGPIMLLWFLVIAVLGLTGIVRNPSVLTALDPRHAIGFLAHSGGNGMLVLGGVFLCITGGEALYADMGHFGPGPIRLSWYAIVLPSLLLSYAGQTALLIQKGTIEGNPFFQLCPTWGVYPLVFLAMIATIIASQSIITGSFSMTRQAMQLGWLPGFHIRQTSDKVYGQIYVPVVNWMMMVATIGITIAFGSSDRLAGAYGTAVSTTMLLTTCLLFTAMRKTWRWPLAVSILIAGLFLIVDVGFFGANLLKIAEGGWLPLTFGALVFFLMLTWRSGIDAVRESLAQASEAPERFVADLAAGKVPRVPGTAIFLTRTYQKIPPLLIDHVKHMGALHQSVIALTILFEESPRIDDEERCGVEKIADGIWRVTMRFGFVEIPDLTAALKRVKGLDPSIDLDHAIYFATRDIIVARAGSSLFAHWRLPVFAFLYRNAVKVVDRFSLPPDRVVEIARQIEL.

12 helical membrane passes run 31 to 51 (AALGALGIVYGDLGTSPLYTL), 64 to 84 (TASALGILSLLVWTLIITISI), 119 to 139 (ILAVMGLLGAALLYGDGVITP), 155 to 175 (GSLKPFVMPAAVAILIVFFAA), 183 to 203 (IGAAFGPIMLLWFLVIAVLGL), 221 to 241 (AIGFLAHSGGNGMLVLGGVFL), 265 to 285 (WYAIVLPSLLLSYAGQTALLI), 298 to 318 (LCPTWGVYPLVFLAMIATIIA), 355 to 375 (IYVPVVNWMMMVATIGITIAF), 381 to 401 (LAGAYGTAVSTTMLLTTCLLF), 412 to 432 (LAVSILIAGLFLIVDVGFFGA), and 437 to 457 (IAEGGWLPLTFGALVFFLMLT).

The protein belongs to the HAK/KUP transporter (TC 2.A.72) family.

It is found in the cell inner membrane. The enzyme catalyses K(+)(in) + H(+)(in) = K(+)(out) + H(+)(out). Functionally, transport of potassium into the cell. Likely operates as a K(+):H(+) symporter. The polypeptide is Probable potassium transport system protein Kup 4 (Bradyrhizobium sp. (strain BTAi1 / ATCC BAA-1182)).